Here is a 253-residue protein sequence, read N- to C-terminus: MGQCGITSSKTVLVFLNLIFWGAAGILCYVGAYVFITYDDYDHFFEDVYTLIPAVVIIAVGALLFIIGLIGCCATIRESRCGLATFVIILLLVFVTEVVVVVLGYVYRAKVENEVDRSIQKVYKTYNGTNPDAASRAIDYVQRQLHCCGIHNYSDWENTDWFKETKNQSVPLSCCRETASNCNGSLAHPSDLYAEGCEALVVKKLQEIMMHVIWAALAFAAIQLLGMLCACIVLCRRSRDPAYELLITGGTYA.

At 1–11 (MGQCGITSSKT) the chain is on the cytoplasmic side. The chain crosses the membrane as a helical span at residues 12–32 (VLVFLNLIFWGAAGILCYVGA). Topologically, residues 33-50 (YVFITYDDYDHFFEDVYT) are extracellular. A helical membrane pass occupies residues 51-71 (LIPAVVIIAVGALLFIIGLIG). The Cytoplasmic portion of the chain corresponds to 72–85 (CCATIRESRCGLAT). The helical transmembrane segment at 86–106 (FVIILLLVFVTEVVVVVLGYV) threads the bilayer. Residues 107 to 212 (YRAKVENEVD…KKLQEIMMHV (106 aa)) lie on the Extracellular side of the membrane. Asn-127, Asn-152, Asn-167, and Asn-183 each carry an N-linked (GlcNAc...) asparagine glycan. Residues 213–233 (IWAALAFAAIQLLGMLCACIV) traverse the membrane as a helical segment. Residues 234 to 253 (LCRRSRDPAYELLITGGTYA) are Cytoplasmic-facing.

The protein belongs to the tetraspanin (TM4SF) family. In terms of assembly, interacts with claudin-11/CLDN11 and integrins.

It localises to the membrane. Regulates the proliferation and migration of oligodendrocytes, a process essential for normal myelination and repair. The chain is Tetraspanin-3 (TSPAN3) from Homo sapiens (Human).